The chain runs to 506 residues: MEFSPRAAELTNLLESRITNFYTNFQVDEIGRVVSVGDGIARVYGLNEIQAGEMVEFASGVKGIALNLENENVGIVVFGSDTAIKEGDLVKRTGSIVDVPAGKAMLGRVVDALGVPIDGRGALSDHERRRVEVKAPGIIERKSVHEPMQTGLKAVDSLVPIGRGQRELIIGDRQTGKTAIAIDTILNQKQLNSKATSESETLYCVYVAVGQKRSTVAQLVQILSEANALEYSILVAATASDPAPLQFLAPYSGCAMGEYFRDNGMHALIIYDDLSKQAVAYRQMSLLLRRPPGREAFPGDVFYLHSRLLERAAKRSDQTGAGSLTALPVIETQAGDVSAYIPTNVISITDGQICLETELFYRGIRPAINVGLSVSRVGSAAQLKAMKQVCGSPKLELAQYREVAAFAQFGSDLDAATQALLNRGARLTEVPKQPQYAPLPIEKQILVIYAAVNGFCDRMPLDKISQYERTIPNSVKPELLQSLKGGLTNEKKMELDSFLKECALNY.

An ATP-binding site is contributed by Gly171 to Thr178.

The protein belongs to the ATPase alpha/beta chains family. In terms of assembly, F-type ATPases have 2 components, CF(1) - the catalytic core - and CF(0) - the membrane proton channel. CF(1) has five subunits: alpha(3), beta(3), gamma(1), delta(1), epsilon(1). CF(0) has three main subunits: a, b and c.

It localises to the mitochondrion. The protein localises to the mitochondrion inner membrane. In terms of biological role, mitochondrial membrane ATP synthase (F(1)F(0) ATP synthase or Complex V) produces ATP from ADP in the presence of a proton gradient across the membrane which is generated by electron transport complexes of the respiratory chain. F-type ATPases consist of two structural domains, F(1) - containing the extramembraneous catalytic core, and F(0) - containing the membrane proton channel, linked together by a central stalk and a peripheral stalk. During catalysis, ATP synthesis in the catalytic domain of F(1) is coupled via a rotary mechanism of the central stalk subunits to proton translocation. Subunits alpha and beta form the catalytic core in F(1). Rotation of the central stalk against the surrounding alpha(3)beta(3) subunits leads to hydrolysis of ATP in three separate catalytic sites on the beta subunits. Subunit alpha does not bear the catalytic high-affinity ATP-binding sites. In Beta vulgaris (Sugar beet), this protein is ATP synthase subunit alpha, mitochondrial (ATPA).